A 964-amino-acid chain; its full sequence is Cycloisomaltooligosaccharide glucanotransferase (964 aa).

The N-terminal stretch at 1–30 (MRVKILPLVFMTLLLIVPSQMLLPSGQANA) is a signal peptide. CBM6 domains are found at residues 413-538 (DRYE…LTLG) and 740-863 (NMYE…LKLD).

It belongs to the glycosyl hydrolase 66 family.

It carries out the reaction cyclizes part of a (1-&gt;6)-alpha-D-glucan chain by formation of a (1-&gt;6)-alpha-D-glucosidic bond.. In terms of biological role, produces cycloisomaltooligosaccharide from dextran. In Niallia circulans (Bacillus circulans), this protein is Cycloisomaltooligosaccharide glucanotransferase (cit).